Reading from the N-terminus, the 288-residue chain is Undecaprenyl-diphosphatase (288 aa).

8 helical membrane-spanning segments follow: residues 11–31 (LDLWQAIVLGFVQGATEFLPI), 49–69 (PGVAFTAVIQLGSIVAVLSYF), 94–114 (AQMGLGILFGTIPILIGGLLI), 129–149 (LAAIAIVSIVMGLLLGIAEQL), 159–179 (LRLADGLWMGFAQALALIPGV), 199–219 (AARFSFLLGIPAITIAGLVEL), 234–254 (VLAIGTLSSLIFSWLAIAWLL), and 265–285 (FVVYRIIFGGVILTAIATGTL).

The protein belongs to the UppP family.

Its subcellular location is the cell inner membrane. The catalysed reaction is di-trans,octa-cis-undecaprenyl diphosphate + H2O = di-trans,octa-cis-undecaprenyl phosphate + phosphate + H(+). In terms of biological role, catalyzes the dephosphorylation of undecaprenyl diphosphate (UPP). Confers resistance to bacitracin. In Synechococcus elongatus (strain ATCC 33912 / PCC 7942 / FACHB-805) (Anacystis nidulans R2), this protein is Undecaprenyl-diphosphatase.